A 149-amino-acid chain; its full sequence is MPFDTKSIFPDFIVFPSAISTIAIGLWSVQAYKLGEARKRYNVKAPHVQGDPEFERIAHEYQNTSEALGAIIPATFMFSYYISPKCSLLLGGTWLVSKMLNCCSYCCKKEKENDCAKNVHTCLSHISFFALLGGSAFGIGSSLYNRYKL.

The next 2 membrane-spanning stretches (helical) occupy residues 7–27 and 123–143; these read SIFP…IGLW and LSHI…GSSL.

It belongs to the MAPEG family.

It is found in the membrane. It catalyses the reaction RX + glutathione = an S-substituted glutathione + a halide anion + H(+). May perform the conjugation of reduced glutathione to electrophiles. The sequence is that of Probable microsomal glutathione S-transferase (mgst) from Dictyostelium discoideum (Social amoeba).